The chain runs to 141 residues: Hemoglobin subunit alpha (141 aa).

One can recognise a Globin domain in the interval 1–141; it reads VLSPADKTNV…VSTVLTSKYR (141 aa). A Phosphoserine modification is found at serine 3. An N6-succinyllysine modification is found at lysine 7. Residue threonine 8 is modified to Phosphothreonine. Lysine 11 is modified (N6-succinyllysine). Residue lysine 16 is modified to N6-acetyllysine; alternate. Position 16 is an N6-succinyllysine; alternate (lysine 16). At tyrosine 24 the chain carries Phosphotyrosine. A Phosphoserine modification is found at serine 35. Lysine 40 carries the post-translational modification N6-succinyllysine. Residue serine 49 is modified to Phosphoserine. Histidine 58 is an O2 binding site. Residue histidine 87 participates in heme b binding. A Phosphoserine modification is found at serine 102. At threonine 108 the chain carries Phosphothreonine. A phosphoserine mark is found at serine 124 and serine 131. Phosphothreonine is present on residues threonine 134 and threonine 137. Serine 138 is modified (phosphoserine).

This sequence belongs to the globin family. Heterotetramer of two alpha chains and two beta chains. In terms of tissue distribution, red blood cells.

Functionally, involved in oxygen transport from the lung to the various peripheral tissues. In terms of biological role, hemopressin acts as an antagonist peptide of the cannabinoid receptor CNR1. Hemopressin-binding efficiently blocks cannabinoid receptor CNR1 and subsequent signaling. This Loris tardigradus (Slender loris) protein is Hemoglobin subunit alpha (HBA).